Here is a 333-residue protein sequence, read N- to C-terminus: MIDIKLPLTDLHRHLDGNIRPETILDLANQHNIQLPANDLESLLPHVQIIENEPSLVSFLQKLDWGVAVLADLDACRRIAIENVEDAINTGLDYAELRFSPYYMAMNHKLPVEGVVEAIIDGIRSARQNNDIDIRLIGILSRTFGEQACTQELTSLLAHQQHITALDLAGDELGFPGHLFQSHFTKARDAGWHITIHAGEAAGAESIWQAIRELGATRIGHGVKAITDPVLMDYLVENRIGIETCLTSNLQTSTVNSLLDHPLKQFLEKDILASINTDDPAVEGIDIRHEYEIAAPAAGLSIAQIRQAQINGLETAFISDTEKQALRMKAANR.

Residues H12 and H14 each contribute to the Zn(2+) site. 3 residues coordinate substrate: H14, D16, and G170. H197 is a binding site for Zn(2+). The active-site Proton donor is the E200. D278 contacts Zn(2+). D279 is a binding site for substrate.

The protein belongs to the metallo-dependent hydrolases superfamily. Adenosine and AMP deaminases family. Adenosine deaminase subfamily. Zn(2+) serves as cofactor.

It carries out the reaction adenosine + H2O + H(+) = inosine + NH4(+). It catalyses the reaction 2'-deoxyadenosine + H2O + H(+) = 2'-deoxyinosine + NH4(+). Its function is as follows. Catalyzes the hydrolytic deamination of adenosine and 2-deoxyadenosine. The chain is Adenosine deaminase from Photorhabdus laumondii subsp. laumondii (strain DSM 15139 / CIP 105565 / TT01) (Photorhabdus luminescens subsp. laumondii).